A 493-amino-acid chain; its full sequence is Glutamyl-tRNA(Gln) amidotransferase subunit A (493 aa).

Residues K78 and S158 each act as charge relay system in the active site. Residue S182 is the Acyl-ester intermediate of the active site.

This sequence belongs to the amidase family. GatA subfamily. As to quaternary structure, heterotrimer of A, B and C subunits.

The catalysed reaction is L-glutamyl-tRNA(Gln) + L-glutamine + ATP + H2O = L-glutaminyl-tRNA(Gln) + L-glutamate + ADP + phosphate + H(+). In terms of biological role, allows the formation of correctly charged Gln-tRNA(Gln) through the transamidation of misacylated Glu-tRNA(Gln) in organisms which lack glutaminyl-tRNA synthetase. The reaction takes place in the presence of glutamine and ATP through an activated gamma-phospho-Glu-tRNA(Gln). This is Glutamyl-tRNA(Gln) amidotransferase subunit A from Rickettsia rickettsii (strain Iowa).